Reading from the N-terminus, the 602-residue chain is Aspartate--tRNA(Asp/Asn) ligase (602 aa).

Glutamate 170 provides a ligand contact to L-aspartate. The interval 194–197 (QLFK) is aspartate. Arginine 216 is an L-aspartate binding site. Residues 216-218 (RDE) and glutamine 225 contribute to the ATP site. Residue histidine 448 participates in L-aspartate binding. Glutamate 482 contributes to the ATP binding site. Arginine 489 contributes to the L-aspartate binding site. 534–537 (GWDR) serves as a coordination point for ATP. A disordered region spans residues 559–602 (GGVDPLTSAPAPITAQQRKESGVDAKPEPKGDAAAAKPQVSAEK). The span at 575–589 (QRKESGVDAKPEPKG) shows a compositional bias: basic and acidic residues.

Belongs to the class-II aminoacyl-tRNA synthetase family. Type 1 subfamily. In terms of assembly, homodimer.

The protein localises to the cytoplasm. The enzyme catalyses tRNA(Asx) + L-aspartate + ATP = L-aspartyl-tRNA(Asx) + AMP + diphosphate. Its function is as follows. Aspartyl-tRNA synthetase with relaxed tRNA specificity since it is able to aspartylate not only its cognate tRNA(Asp) but also tRNA(Asn). Reaction proceeds in two steps: L-aspartate is first activated by ATP to form Asp-AMP and then transferred to the acceptor end of tRNA(Asp/Asn). The chain is Aspartate--tRNA(Asp/Asn) ligase from Rhodococcus opacus (strain B4).